The following is a 523-amino-acid chain: Sporulation protein 23 (523 aa).

Interacts with SPO1 in meiosis.

Functionally, regulates expression of PIS1. The sequence is that of Sporulation protein 23 (SPO23) from Saccharomyces cerevisiae (strain ATCC 204508 / S288c) (Baker's yeast).